Here is a 224-residue protein sequence, read N- to C-terminus: Orotate phosphoribosyltransferase (224 aa).

Lys-29 contributes to the 5-phospho-alpha-D-ribose 1-diphosphate binding site. 37 to 38 (FF) provides a ligand contact to orotate. 5-phospho-alpha-D-ribose 1-diphosphate contacts are provided by residues 75–76 (YK), Arg-105, Lys-106, Lys-109, His-111, and 130–138 (DDVITAGTS). Residues Thr-134 and Arg-162 each contribute to the orotate site.

The protein belongs to the purine/pyrimidine phosphoribosyltransferase family. PyrE subfamily. As to quaternary structure, homodimer. Mg(2+) serves as cofactor.

It carries out the reaction orotidine 5'-phosphate + diphosphate = orotate + 5-phospho-alpha-D-ribose 1-diphosphate. It participates in pyrimidine metabolism; UMP biosynthesis via de novo pathway; UMP from orotate: step 1/2. Functionally, catalyzes the transfer of a ribosyl phosphate group from 5-phosphoribose 1-diphosphate to orotate, leading to the formation of orotidine monophosphate (OMP). The sequence is that of Orotate phosphoribosyltransferase from Bordetella parapertussis (strain 12822 / ATCC BAA-587 / NCTC 13253).